The sequence spans 442 residues: D-serine dehydratase (442 aa).

Lys-118 is modified (N6-(pyridoxal phosphate)lysine).

This sequence belongs to the serine/threonine dehydratase family. DsdA subfamily. In terms of assembly, monomer. Pyridoxal 5'-phosphate serves as cofactor.

It carries out the reaction D-serine = pyruvate + NH4(+). The protein is D-serine dehydratase of Escherichia coli O81 (strain ED1a).